The sequence spans 274 residues: Lectizyme (274 aa).

A signal peptide spans 1–16; that stretch reads MKFFAVFALCVASVSA. The 237-residue stretch at 32 to 268 folds into the Peptidase S1 domain; that stretch reads IINGHEAEKG…FDKWIEDSIE (237 aa). An intrachain disulfide couples cysteine 57 to cysteine 73. Catalysis depends on charge relay system residues histidine 72 and aspartate 119. Cystine bridges form between cysteine 188/cysteine 204 and cysteine 215/cysteine 244. Serine 219 serves as the catalytic Charge relay system.

This sequence belongs to the peptidase S1 family. Expressed in the midgut.

The protein resides in the secreted. Its function is as follows. Protein with lectin and protease activity involved in the establishment of trypanosome infections in tsetse flies. Binds D-glucosamine and agglutinates bloodstream-form trypanosomes and rabbit red blood cells. Capable of inducing transformation of bloodstream-form trypanosomes into procyclic (midgut) forms in vitro. The protein is Lectizyme (Gpl) of Glossina austeni (Savannah tsetse fly).